Consider the following 258-residue polypeptide: MLSRRIIPCLDVRDGRVVKGVKFRDHIDMGDIVELAMRYRDQGADELVFYDIGASPEGRSVDYAWVGRVARLIDIPFCVAGGIRDVETARAVLHAGADKISINSPALGRPQLISELADAFGVQCVVVGIDSIREEDGQWRVRRYTGDPSKTQALPMRTLDWVAEAQRLGAGEIVLNCMDNDGVRHGYDIAQLRQVRALCRVPLIASGGAGEMQHFADVFDQADADGALAASVFHSGAIPIPELKRFLRAQQIEVRDGQ.

Residues D11 and D130 contribute to the active site.

It belongs to the HisA/HisF family. Heterodimer of HisH and HisF.

It is found in the cytoplasm. The enzyme catalyses 5-[(5-phospho-1-deoxy-D-ribulos-1-ylimino)methylamino]-1-(5-phospho-beta-D-ribosyl)imidazole-4-carboxamide + L-glutamine = D-erythro-1-(imidazol-4-yl)glycerol 3-phosphate + 5-amino-1-(5-phospho-beta-D-ribosyl)imidazole-4-carboxamide + L-glutamate + H(+). The protein operates within amino-acid biosynthesis; L-histidine biosynthesis; L-histidine from 5-phospho-alpha-D-ribose 1-diphosphate: step 5/9. IGPS catalyzes the conversion of PRFAR and glutamine to IGP, AICAR and glutamate. The HisF subunit catalyzes the cyclization activity that produces IGP and AICAR from PRFAR using the ammonia provided by the HisH subunit. This is Imidazole glycerol phosphate synthase subunit HisF from Xanthomonas campestris pv. campestris (strain B100).